The chain runs to 233 residues: Ribose-5-phosphate isomerase A (233 aa).

Residues Thr-28–Thr-31, Asp-83–Asp-86, and Lys-96–Gly-99 each bind substrate. Residue Glu-105 is the Proton acceptor of the active site. Lys-123 serves as a coordination point for substrate.

The protein belongs to the ribose 5-phosphate isomerase family. As to quaternary structure, homodimer.

It carries out the reaction aldehydo-D-ribose 5-phosphate = D-ribulose 5-phosphate. Its pathway is carbohydrate degradation; pentose phosphate pathway; D-ribose 5-phosphate from D-ribulose 5-phosphate (non-oxidative stage): step 1/1. Catalyzes the reversible conversion of ribose-5-phosphate to ribulose 5-phosphate. The polypeptide is Ribose-5-phosphate isomerase A (Rhizobium rhizogenes (strain K84 / ATCC BAA-868) (Agrobacterium radiobacter)).